Consider the following 121-residue polypeptide: Large ribosomal subunit protein uL14c (121 aa).

The protein belongs to the universal ribosomal protein uL14 family. As to quaternary structure, part of the 50S ribosomal subunit.

The protein resides in the plastid. It is found in the apicoplast. Binds to 23S rRNA. The chain is Large ribosomal subunit protein uL14c (rpl14) from Eimeria tenella (Coccidian parasite).